We begin with the raw amino-acid sequence, 489 residues long: Ribulose-1,5 bisphosphate carboxylase/oxygenase large subunit N-methyltransferase, chloroplastic (489 aa).

The transit peptide at 1-37 (MATIFSGGSVSPFLFHTNKGTSFTPKAPILHLKRSFS) directs the protein to the chloroplast. An SET domain is found at 64–288 (EGVITAKTPV…AGEQVYIQYD (225 aa)). Residues 80–82 (EGL) and arginine 222 contribute to the S-adenosyl-L-methionine site. Residues arginine 222, arginine 226, and aspartate 239 each contribute to the substrate site. Residue 242 to 243 (NH) participates in S-adenosyl-L-methionine binding. The substrate site is built by tyrosine 254, tyrosine 287, and tyrosine 300.

It belongs to the class V-like SAM-binding methyltransferase superfamily. Plant protein-lysine LSMT methyltransferase family. As to quaternary structure, homotrimer. As to expression, highly expressed in leaf.

It is found in the plastid. The protein resides in the chloroplast. It carries out the reaction L-lysyl-[ribulose-1,5-bisphosphate carboxylase] + 3 S-adenosyl-L-methionine = N(6),N(6),N(6)-trimethyl-L-lysyl-[ribulose-1,5-bisphosphate carboxylase] + 3 S-adenosyl-L-homocysteine + 3 H(+). It catalyses the reaction [fructose-bisphosphate aldolase]-L-lysine + 3 S-adenosyl-L-methionine = [fructose-bisphosphate aldolase]-N(6),N(6),N(6)-trimethyl-L-lysine + 3 S-adenosyl-L-homocysteine + 3 H(+). Functionally, methylates 'Lys-14' of the large subunit of RuBisCO. Can also use with lower efficiency chloroplastic fructose-bisphosphate aldolases and gamma-tocopherol methyltransferase as substrates, but not a cytosolic aldolase. The sequence is that of Ribulose-1,5 bisphosphate carboxylase/oxygenase large subunit N-methyltransferase, chloroplastic (RBCMT) from Pisum sativum (Garden pea).